Here is a 411-residue protein sequence, read N- to C-terminus: MSDKNIRCSFCGRTQKEVKKLIAGPGVYICDECVKLAYDIIEEEDSEEIEEENQEFVLPKPHEIKNFLDQYVIGQERAKKILSVAVYNHYKRIFMRSKITEDVEIQKSNVLLIGPTGVGKTLLAETLAKFLKVPFAIADATTLTEAGYVGEDVENILLRLIQNADWDIKRAEKGIVYIDEIDKISRKSENPSITRDVSGEGVQQALLRIVEGTIANVPPQGGRKHPYQEFIQINTKDILFIAGGSFEGIEKIVEKRLDVSNIGFGAQIEPKNRKSLTQILNHIIPEDLIKFGMIPEFVGRFPVVAVLEPLSEEALLKILTEPKNALVKQYKALLSMEGVEINFTDEALKAIVKEAIDKATGARGLRAVMEELMLDLMYELPNLGIKKFTVTPELVYNRNKISQDLLKKLAG.

A ClpX-type ZB domain is found at 1–49; that stretch reads MSDKNIRCSFCGRTQKEVKKLIAGPGVYICDECVKLAYDIIEEEDSEEI. The Zn(2+) site is built by cysteine 8, cysteine 11, cysteine 30, and cysteine 33. 115–122 is a binding site for ATP; it reads PTGVGKTL.

Belongs to the ClpX chaperone family. In terms of assembly, component of the ClpX-ClpP complex. Forms a hexameric ring that, in the presence of ATP, binds to fourteen ClpP subunits assembled into a disk-like structure with a central cavity, resembling the structure of eukaryotic proteasomes.

Functionally, ATP-dependent specificity component of the Clp protease. It directs the protease to specific substrates. Can perform chaperone functions in the absence of ClpP. In Dictyoglomus turgidum (strain DSM 6724 / Z-1310), this protein is ATP-dependent Clp protease ATP-binding subunit ClpX.